Reading from the N-terminus, the 306-residue chain is 4-hydroxy-3-methylbut-2-enyl diphosphate reductase (306 aa).

Residue Cys12 participates in [4Fe-4S] cluster binding. (2E)-4-hydroxy-3-methylbut-2-enyl diphosphate-binding residues include His41 and His74. Dimethylallyl diphosphate contacts are provided by His41 and His74. Isopentenyl diphosphate-binding residues include His41 and His74. Cys96 provides a ligand contact to [4Fe-4S] cluster. Residue His124 coordinates (2E)-4-hydroxy-3-methylbut-2-enyl diphosphate. Position 124 (His124) interacts with dimethylallyl diphosphate. His124 provides a ligand contact to isopentenyl diphosphate. Residue Glu126 is the Proton donor of the active site. Thr164 lines the (2E)-4-hydroxy-3-methylbut-2-enyl diphosphate pocket. Cys194 contacts [4Fe-4S] cluster. (2E)-4-hydroxy-3-methylbut-2-enyl diphosphate is bound by residues Ser222, Ser223, Asn224, and Ser266. Ser222, Ser223, Asn224, and Ser266 together coordinate dimethylallyl diphosphate. Residues Ser222, Ser223, Asn224, and Ser266 each coordinate isopentenyl diphosphate.

It belongs to the IspH family. [4Fe-4S] cluster serves as cofactor.

The catalysed reaction is isopentenyl diphosphate + 2 oxidized [2Fe-2S]-[ferredoxin] + H2O = (2E)-4-hydroxy-3-methylbut-2-enyl diphosphate + 2 reduced [2Fe-2S]-[ferredoxin] + 2 H(+). The enzyme catalyses dimethylallyl diphosphate + 2 oxidized [2Fe-2S]-[ferredoxin] + H2O = (2E)-4-hydroxy-3-methylbut-2-enyl diphosphate + 2 reduced [2Fe-2S]-[ferredoxin] + 2 H(+). Its pathway is isoprenoid biosynthesis; dimethylallyl diphosphate biosynthesis; dimethylallyl diphosphate from (2E)-4-hydroxy-3-methylbutenyl diphosphate: step 1/1. It participates in isoprenoid biosynthesis; isopentenyl diphosphate biosynthesis via DXP pathway; isopentenyl diphosphate from 1-deoxy-D-xylulose 5-phosphate: step 6/6. In terms of biological role, catalyzes the conversion of 1-hydroxy-2-methyl-2-(E)-butenyl 4-diphosphate (HMBPP) into a mixture of isopentenyl diphosphate (IPP) and dimethylallyl diphosphate (DMAPP). Acts in the terminal step of the DOXP/MEP pathway for isoprenoid precursor biosynthesis. The sequence is that of 4-hydroxy-3-methylbut-2-enyl diphosphate reductase from Ruthia magnifica subsp. Calyptogena magnifica.